A 504-amino-acid chain; its full sequence is MFS antiporter QDR2 (504 aa).

Polar residues predominate over residues 1–14 (MLSTTQSVTEPTEV). The interval 1–23 (MLSTTQSVTEPTEVTSKKVEDIE) is disordered. At 1-41 (MLSTTQSVTEPTEVTSKKVEDIEKENDEETPYSIFTSYDRL) the chain is on the cytoplasmic side. A helical transmembrane segment spans residues 42–62 (VLIVILSLIGFWSTISSPIYF). Residues 63 to 75 (PALPTLTSYFHTS) are Extracellular-facing. A helical transmembrane segment spans residues 76–96 (SSIMNISVVAYLIFQGIAPTI). The Cytoplasmic segment spans residues 97–106 (SSNLADTFGR). Residues 107-129 (RPVILASIIVFCASCVAISQTNV) traverse the membrane as a helical segment. At 130 to 132 (YWL) the chain is on the extracellular side. The chain crosses the membrane as a helical span at residues 133–155 (LAVLRCIQAAGIAAVISISSGVA). The Cytoplasmic portion of the chain corresponds to 156-169 (GDVCTRANRGSMVG). The chain crosses the membrane as a helical span at residues 170 to 190 (AVAGLQLVGNGIGGLVGAALI). Residues 191 to 198 (SSFNSWRS) lie on the Extracellular side of the membrane. A helical membrane pass occupies residues 199 to 219 (IFIFLTIGGGVTFILAIFILP). Residues 220 to 278 (ETSRKLVGNGSVVPKNILNKSPYIYLPHFKKRMNNDITTIVPATRFDLLGPLKIFFQKN) are Cytoplasmic-facing. Residues 279-299 (VFCTLLPVGIHFAAWTMVLTS) traverse the membrane as a helical segment. Residues 300–311 (LSTELESRYHYS) are Extracellular-facing. Residues 312-332 (VMHVGLIYLPQGIACIAGSLV) form a helical membrane-spanning segment. At 333-370 (VGKSLDWYYRYRKTIYDQEVECLPLDERPQFNIVATRL) the chain is on the cytoplasmic side. The helical transmembrane segment at 371 to 391 (TLSVVPALLMIIGLVIFGWCI) threads the bilayer. The Extracellular segment spans residues 392 to 396 (QYKRH). Residues 397 to 417 (IISIIISTILVSFSASVFIAI) form a helical membrane-spanning segment. Over 418-438 (CTTMLVDLYPNNGSGSTSCLN) the chain is Cytoplasmic. The helical transmembrane segment at 439 to 456 (LMRCWLAALGAGVLDSMI) threads the bilayer. The Extracellular segment spans residues 457-460 (NAMN). A helical membrane pass occupies residues 461–483 (VGGTYTVVAGFCILFDLALIYVL). Over 484–504 (HNAKKKFSNSGPTTTKSPPKQ) the chain is Cytoplasmic.

The protein belongs to the major facilitator superfamily. CAR1 family.

Its subcellular location is the cell membrane. MFS antiporter that does not display functional linkage as drug transporter and performs functions that significantly affect biofilm development and virulence. No substrate for transport has been identified yet, but plays an important role in the growth in the host. The sequence is that of MFS antiporter QDR2 (QDR2) from Candida albicans (strain SC5314 / ATCC MYA-2876) (Yeast).